The chain runs to 197 residues: Protein RmlC homolog (197 aa).

H76 functions as the Proton acceptor in the catalytic mechanism. The active-site Proton donor is the Y140.

Functionally, could catalyze a 3,5-epimerization. This is Protein RmlC homolog (rfbC) from Streptococcus pyogenes serotype M6 (strain ATCC BAA-946 / MGAS10394).